A 42-amino-acid polypeptide reads, in one-letter code: Large ribosomal subunit protein bL36 (42 aa).

This sequence belongs to the bacterial ribosomal protein bL36 family.

The sequence is that of Large ribosomal subunit protein bL36 from Wolbachia sp. subsp. Brugia malayi (strain TRS).